Reading from the N-terminus, the 179-residue chain is MEKIIIDAEQFQRTISRISHQIIEKHSSLDNLVLVGIKRRGAEIAEMLQSRIAELAQTELPLMALDITFYRDDLHLDHQDPVYTGVESQIDITGKNVILIDDVLFTGRTIRAALDALLDFGRATRIELVILVDRGHRELPIRADYVGKNIPTARTEQVQVRTQFYDGMNQVVLIRAKDE.

The short motif at valine 97–threonine 109 is the PRPP-binding element.

This sequence belongs to the purine/pyrimidine phosphoribosyltransferase family. PyrR subfamily.

It catalyses the reaction UMP + diphosphate = 5-phospho-alpha-D-ribose 1-diphosphate + uracil. In terms of biological role, regulates the transcription of the pyrimidine nucleotide (pyr) operon in response to exogenous pyrimidines. Its function is as follows. Also displays a weak uracil phosphoribosyltransferase activity which is not physiologically significant. The protein is Bifunctional protein PyrR of Actinobacillus pleuropneumoniae serotype 5b (strain L20).